A 249-amino-acid chain; its full sequence is Diaminopimelate epimerase (249 aa).

Residues Asn11 and Asn60 each coordinate substrate. The active-site Proton donor is the Cys69. Substrate is bound by residues 70–71 (GN), Asn164, and 182–183 (ER). Cys192 functions as the Proton acceptor in the catalytic mechanism. Position 193 to 194 (193 to 194 (GT)) interacts with substrate.

Belongs to the diaminopimelate epimerase family. As to quaternary structure, homodimer.

Its subcellular location is the cytoplasm. The catalysed reaction is (2S,6S)-2,6-diaminopimelate = meso-2,6-diaminopimelate. Its pathway is amino-acid biosynthesis; L-lysine biosynthesis via DAP pathway; DL-2,6-diaminopimelate from LL-2,6-diaminopimelate: step 1/1. Its function is as follows. Catalyzes the stereoinversion of LL-2,6-diaminopimelate (L,L-DAP) to meso-diaminopimelate (meso-DAP), a precursor of L-lysine and an essential component of the bacterial peptidoglycan. The polypeptide is Diaminopimelate epimerase (Campylobacter jejuni subsp. jejuni serotype O:2 (strain ATCC 700819 / NCTC 11168)).